The primary structure comprises 149 residues: Calmodulin-1 (149 aa).

At A2 the chain carries N-acetylalanine. EF-hand domains are found at residues 8-43, 44-79, 81-116, and 117-149; these read EQIA…LGQN, PTEA…KMKD, DSEE…LGEK, and LTDE…MTSK. Positions 21, 23, 25, 27, 32, 57, 59, 61, 63, 68, 94, 96, 98, and 105 each coordinate Ca(2+). N6,N6,N6-trimethyllysine is present on K116. Residues D130, D132, D134, Q136, and E141 each contribute to the Ca(2+) site.

The protein belongs to the calmodulin family.

Calmodulin mediates the control of a large number of enzymes, ion channels and other proteins by Ca(2+). Among the enzymes to be stimulated by the calmodulin-Ca(2+) complex are a number of protein kinases and phosphatases. The sequence is that of Calmodulin-1 from Branchiostoma floridae (Florida lancelet).